The following is a 203-amino-acid chain: Endo-type membrane-bound lytic murein transglycosylase A (203 aa).

An N-terminal signal peptide occupies residues 1–15 (MKLRWFAFLIVLLAG). Cys16 carries N-palmitoyl cysteine lipidation. Cys16 carries the S-diacylglycerol cysteine lipid modification.

The protein belongs to the transglycosylase Slt family.

It is found in the cell outer membrane. The catalysed reaction is Endolytic cleavage of the (1-&gt;4)-beta-glycosidic linkage between N-acetylmuramic acid (MurNAc) and N-acetylglucosamine (GlcNAc) residues in peptidoglycan with concomitant formation of a 1,6-anhydrobond in the MurNAc residue.. Its function is as follows. Murein-degrading enzyme. May play a role in recycling of muropeptides during cell elongation and/or cell division. Preferentially cleaves at a distance of more than two disaccharide units from the ends of the glycan chain. The protein is Endo-type membrane-bound lytic murein transglycosylase A of Escherichia coli (strain K12 / MC4100 / BW2952).